Consider the following 377-residue polypeptide: Succinyl-diaminopimelate desuccinylase (377 aa).

His-66 serves as a coordination point for Zn(2+). Residue Asp-68 is part of the active site. Residue Asp-99 coordinates Zn(2+). The active-site Proton acceptor is the Glu-133. Residues Glu-134, Glu-162, and His-348 each contribute to the Zn(2+) site.

Belongs to the peptidase M20A family. DapE subfamily. Homodimer. It depends on Zn(2+) as a cofactor. The cofactor is Co(2+).

The catalysed reaction is N-succinyl-(2S,6S)-2,6-diaminopimelate + H2O = (2S,6S)-2,6-diaminopimelate + succinate. It participates in amino-acid biosynthesis; L-lysine biosynthesis via DAP pathway; LL-2,6-diaminopimelate from (S)-tetrahydrodipicolinate (succinylase route): step 3/3. In terms of biological role, catalyzes the hydrolysis of N-succinyl-L,L-diaminopimelic acid (SDAP), forming succinate and LL-2,6-diaminopimelate (DAP), an intermediate involved in the bacterial biosynthesis of lysine and meso-diaminopimelic acid, an essential component of bacterial cell walls. This Xylella fastidiosa (strain M12) protein is Succinyl-diaminopimelate desuccinylase.